The primary structure comprises 370 residues: Lipoyl synthase, mitochondrial (370 aa).

[4Fe-4S] cluster contacts are provided by Cys104, Cys109, Cys115, Cys135, Cys139, Cys142, and Ser350. The region spanning 118–339 is the Radical SAM core domain; sequence GGDKSKATAT…KQKALELGFL (222 aa).

The protein belongs to the radical SAM superfamily. Lipoyl synthase family. [4Fe-4S] cluster is required as a cofactor.

The protein resides in the mitochondrion. The enzyme catalyses [[Fe-S] cluster scaffold protein carrying a second [4Fe-4S](2+) cluster] + N(6)-octanoyl-L-lysyl-[protein] + 2 oxidized [2Fe-2S]-[ferredoxin] + 2 S-adenosyl-L-methionine + 4 H(+) = [[Fe-S] cluster scaffold protein] + N(6)-[(R)-dihydrolipoyl]-L-lysyl-[protein] + 4 Fe(3+) + 2 hydrogen sulfide + 2 5'-deoxyadenosine + 2 L-methionine + 2 reduced [2Fe-2S]-[ferredoxin]. Its pathway is protein modification; protein lipoylation via endogenous pathway; protein N(6)-(lipoyl)lysine from octanoyl-[acyl-carrier-protein]: step 2/2. Catalyzes the radical-mediated insertion of two sulfur atoms into the C-6 and C-8 positions of the octanoyl moiety bound to the lipoyl domains of lipoate-dependent enzymes, thereby converting the octanoylated domains into lipoylated derivatives. The protein is Lipoyl synthase, mitochondrial of Kluyveromyces lactis (strain ATCC 8585 / CBS 2359 / DSM 70799 / NBRC 1267 / NRRL Y-1140 / WM37) (Yeast).